Consider the following 400-residue polypeptide: PHD finger protein 24 (400 aa).

The N-myristoyl glycine moiety is linked to residue Gly2. Positions 30–108 are disordered; it reads DRPSIRRTGE…FTPPAFIRPT (79 aa). At Arg36 the chain carries Omega-N-methylarginine. Ser43 is modified (phosphoserine). Phosphothreonine is present on Thr47. At Ser51 the chain carries Phosphoserine. Basic and acidic residues predominate over residues 78–97; the sequence is AWERLRDGRGVEPEEFDRTG. A PHD-type zinc finger spans residues 129 to 190; sequence NDEMCDVCEV…TGWSCHYCDN (62 aa).

The protein is PHD finger protein 24 of Pongo abelii (Sumatran orangutan).